Reading from the N-terminus, the 864-residue chain is Paramyosin (864 aa).

The tract at residues 1 to 30 is nonhelical region; sequence MSSLYRDLDSDVSSTRIVRHSYNVYRGSSP. Residues 31-853 are a coiled coil; it reads SSQNRLESRI…QTVRRSRSMS (823 aa). A nonhelical region region spans residues 854-864; sequence VSREVTRVVRV.

It belongs to the paramyosin family. Homodimer. In terms of processing, phosphorylated. Most abundantly expressed in muscle tissues from byssus retractor and adductor muscles. Low expression in foot, gill, inner mantle and outer mantle.

The protein resides in the cytoplasm. Its subcellular location is the myofibril. Its function is as follows. Paramyosin is a major structural component of many thick filaments isolated from invertebrate muscles. This Mytilus galloprovincialis (Mediterranean mussel) protein is Paramyosin.